A 358-amino-acid polypeptide reads, in one-letter code: GTPase Obg (358 aa).

The Obg domain maps to 1-159 (MKFVDEVTIR…RNLHLELRLL (159 aa)). The OBG-type G domain maps to 160 to 334 (ADVGLLGMPN…LAQDVMNRLE (175 aa)). Residues 166 to 173 (GMPNAGKS), 191 to 195 (FTTLY), 213 to 216 (DIPG), 284 to 287 (NKLD), and 315 to 317 (SAL) contribute to the GTP site. 2 residues coordinate Mg(2+): serine 173 and threonine 193. The interval 337 to 358 (DEEAREAGERARREQRQEEGPE) is disordered. The span at 341–358 (REAGERARREQRQEEGPE) shows a compositional bias: basic and acidic residues.

The protein belongs to the TRAFAC class OBG-HflX-like GTPase superfamily. OBG GTPase family. In terms of assembly, monomer. The cofactor is Mg(2+).

Its subcellular location is the cytoplasm. An essential GTPase which binds GTP, GDP and possibly (p)ppGpp with moderate affinity, with high nucleotide exchange rates and a fairly low GTP hydrolysis rate. Plays a role in control of the cell cycle, stress response, ribosome biogenesis and in those bacteria that undergo differentiation, in morphogenesis control. This is GTPase Obg from Alkalilimnicola ehrlichii (strain ATCC BAA-1101 / DSM 17681 / MLHE-1).